We begin with the raw amino-acid sequence, 500 residues long: MELPRAFGLLLHPTSLPGPYGVGVLGREARDFLRFLKEAGGRYWQVLPLGPTGYGDSPYQSFSAFAGNPYLIDLRPLAERGYVRLEDPGFPQGRVDYGLLYAWKWPALKEAFRGFKEKASPEEREAFAAFREREAWWLEDYALFMALKGAHGGLPWNRWPLPLRKREEKALREAKSALAEEVAFHAFTQWLFFRQWGALKAEAEALGIRIIGDMPIFVAEDSAEVWAHPEWFHLDEEGRPTVVAGVPPDYFSETGQRWGNPLYRWDVLEREGFSFWIRRLEKALELFHLVRIDHFRGFEAYWEIPASCPTAVEGRWVKAPGEKLFQKIQEVFGEVPVLAEDLGVITPEVEALRDRFGLPGMKVLQFAFDDGMENPFLPHNYPAHGRVVVYTGTHDNDTTLGWYRTATPHEKAFMARYLADWGITFREEEEVPWALMHLGMKSVARLAVYPVQDVLALGSEARMNYPGRPSGNWAWRLLPGELSPEHGARLRAMAEATERL.

This sequence belongs to the disproportionating enzyme family.

It is found in the cytoplasm. The enzyme catalyses Transfers a segment of a (1-&gt;4)-alpha-D-glucan to a new position in an acceptor, which may be glucose or a (1-&gt;4)-alpha-D-glucan.. In Thermus thermophilus, this protein is 4-alpha-glucanotransferase (malQ).